Consider the following 222-residue polypeptide: Adapter protein MecA (222 aa).

The protein belongs to the MecA family. Homodimer.

Its function is as follows. Enables the recognition and targeting of unfolded and aggregated proteins to the ClpC protease or to other proteins involved in proteolysis. The chain is Adapter protein MecA from Lysinibacillus sphaericus (strain C3-41).